Reading from the N-terminus, the 144-residue chain is Prefoldin subunit alpha (144 aa).

Belongs to the prefoldin subunit alpha family. In terms of assembly, heterohexamer of two alpha and four beta subunits.

The protein resides in the cytoplasm. Molecular chaperone capable of stabilizing a range of proteins. Seems to fulfill an ATP-independent, HSP70-like function in archaeal de novo protein folding. This is Prefoldin subunit alpha from Methanococcus maripaludis (strain DSM 14266 / JCM 13030 / NBRC 101832 / S2 / LL).